Consider the following 384-residue polypeptide: WAT1-related protein At4g08290 (384 aa).

The next 10 membrane-spanning stretches (helical) occupy residues Leu-15 to Leu-35, Val-43 to Phe-63, Leu-73 to Phe-93, Thr-104 to Leu-124, Ile-140 to Leu-160, Trp-186 to Leu-206, Ser-219 to Val-239, Phe-255 to Val-275, Val-282 to Ile-302, and Ile-307 to Trp-327. EamA domains are found at residues Ala-25–Thr-154 and Val-198–Val-326.

The protein belongs to the drug/metabolite transporter (DMT) superfamily. Plant drug/metabolite exporter (P-DME) (TC 2.A.7.4) family.

It localises to the membrane. This is WAT1-related protein At4g08290 from Arabidopsis thaliana (Mouse-ear cress).